The chain runs to 450 residues: Protein phosphatase 1F (450 aa).

The PPM-type phosphatase domain occupies 152–409; that stretch reads LVSIHAIRNT…DNITVMVVFL (258 aa). Residues D194, G195, D356, and D400 each contribute to the Mn(2+) site. Residues 420–450 are disordered; it reads GQGAGGAQADVGSQDLSTGLSELEINTSQRS. Over residues 433–450 the composition is skewed to polar residues; sequence QDLSTGLSELEINTSQRS. The residue at position 450 (S450) is a Phosphoserine.

This sequence belongs to the PP2C family. Associates with FEM1B. Requires Mg(2+) as cofactor. Mn(2+) is required as a cofactor.

The catalysed reaction is O-phospho-L-seryl-[protein] + H2O = L-seryl-[protein] + phosphate. It carries out the reaction O-phospho-L-threonyl-[protein] + H2O = L-threonyl-[protein] + phosphate. Its function is as follows. Dephosphorylates and concomitantly deactivates CaM-kinase II activated upon autophosphorylation, and CaM-kinases IV and I activated upon phosphorylation by CaM-kinase kinase. Promotes apoptosis. The polypeptide is Protein phosphatase 1F (Ppm1f) (Rattus norvegicus (Rat)).